We begin with the raw amino-acid sequence, 329 residues long: Diaminopimelate epimerase (329 aa).

Substrate-binding residues include N14 and N73. C82 acts as the Proton donor in catalysis. Substrate contacts are provided by residues 83-84, N170, N206, and 224-225; these read GN and ER. The active-site Proton acceptor is the C233. 234–235 contacts substrate; the sequence is GT.

It belongs to the diaminopimelate epimerase family. As to quaternary structure, homodimer.

It localises to the cytoplasm. It carries out the reaction (2S,6S)-2,6-diaminopimelate = meso-2,6-diaminopimelate. The protein operates within amino-acid biosynthesis; L-lysine biosynthesis via DAP pathway; DL-2,6-diaminopimelate from LL-2,6-diaminopimelate: step 1/1. In terms of biological role, catalyzes the stereoinversion of LL-2,6-diaminopimelate (L,L-DAP) to meso-diaminopimelate (meso-DAP), a precursor of L-lysine and an essential component of the bacterial peptidoglycan. The sequence is that of Diaminopimelate epimerase from Listeria monocytogenes serovar 1/2a (strain ATCC BAA-679 / EGD-e).